The primary structure comprises 193 residues: Ion-translocating oxidoreductase complex subunit A (193 aa).

6 helical membrane-spanning segments follow: residues leucine 5–leucine 25, isoleucine 39–valine 59, phenylalanine 62–alanine 82, leucine 102–leucine 122, alanine 134–isoleucine 154, and serine 171–valine 191.

This sequence belongs to the NqrDE/RnfAE family. The complex is composed of six subunits: RnfA, RnfB, RnfC, RnfD, RnfE and RnfG.

The protein resides in the cell inner membrane. Part of a membrane-bound complex that couples electron transfer with translocation of ions across the membrane. This is Ion-translocating oxidoreductase complex subunit A from Yersinia pestis bv. Antiqua (strain Nepal516).